Reading from the N-terminus, the 44-residue chain is Defensin-like peptide (44 aa).

Disulfide bonds link C7/C32, C18/C40, and C22/C42.

Hemolymph.

It is found in the secreted. Functionally, has antibacterial activity against the Gram-positive bacterium S.lutea (MIC=1.9 uM). Lacks antibacterial activity against the Gram-positive bacteria L.monocytogenes and M.luteus, and the Gram-negative bacteria E.coli D31, E.coli ATCC 25922, and S.typhimurium. Has antifungal activity against A.niger (MIC=2.9 uM), C.albicans (MIC=2.9 uM), C.fructus (MIC=2.9 uM), C.wickerhamii (MIC=2.9 uM), P.pastoris (MIC=2.9 uM), P.stiptis (MIC=2.9 uM), P.tannophilus (MIC=2.9 uM), T.harzianum (MIC=2.9 uM), and Z.marxianus (MIC=2.9 uM), but lacks antifungal activity against C.albidus, F.oxysporum, and S.cerevisiae. This is Defensin-like peptide from Galleria mellonella (Greater wax moth).